We begin with the raw amino-acid sequence, 431 residues long: MRQRVGRSIARAKFINTALLGRKRPVMERVVDIAHVDSSKAIQPLMKELETDTTEARYKVLQSVLEIYDDEKNIEPALTKEFHKMYLDVAFEISLPPQMTALDASQPWMLYWIANSLKVMDRDWLSDDTKRKIVDKLFTISPSGGPFGGGPGQLSHLASTYAAINALSLCDNIDGCWDRIDRKGIYQWLISLKEPNGGFKTCLEVGEVDTRGIYCALSIATLLNILTEELTEGVLNYLKNCQNYEGGFGSCPHVDEAHGGYTFCATASLAILRSMDQINVEKLLEWSSARQLQEERGFCGRSNKLVDGCYSFWVGGSAAILEAFGYGQCFNKHALRDYILYCCQEKEQPGLRDKPGAHSDFYHTNYCLLGLAVAESSYSCTPNDSPHNIKCTPDRLIGSSKLTDVNPVYGLPIENVRKIIHYFKSNLSSPS.

PFTB repeat units lie at residues 130–171, 182–224, 231–273, 280–322, and 332–375; these read KRKI…SLCD, RKGI…TLLN, TEGV…AILR, VEKL…AILE, and KHAL…AVAE. (2E,6E)-farnesyl diphosphate contacts are provided by residues 258–261 and 301–304; these read HGGY and RSNK. Asp-307 and Cys-309 together coordinate Zn(2+). 310-313 contacts (2E,6E)-farnesyl diphosphate; the sequence is YSFW. His-363 contacts Zn(2+).

This sequence belongs to the protein prenyltransferase subunit beta family. In terms of assembly, heterodimer of an alpha (RAM2) and a beta (RAM1) subunit. Zn(2+) serves as cofactor.

It is found in the cytoplasm. The catalysed reaction is L-cysteinyl-[protein] + (2E,6E)-farnesyl diphosphate = S-(2E,6E)-farnesyl-L-cysteinyl-[protein] + diphosphate. Catalyzes the transfer of a farnesyl moiety from farnesyl diphosphate to a cysteine at the fourth position from the C-terminus of several proteins having the C-terminal sequence Cys-aliphatic-aliphatic-X where X is Ser, Ala, Met, Cys, or Gln. Required for the membrane localization of proteins such as a-factor, Ras proteins and other membrane proteins containing the C-terminal CAAX motif. The beta subunit is responsible for isoprenoid and peptide-binding. This Saccharomyces cerevisiae (strain ATCC 204508 / S288c) (Baker's yeast) protein is Protein farnesyltransferase subunit beta.